The chain runs to 72 residues: Prokaryotic ubiquitin-like protein Pup (72 aa).

The span at 1 to 10 (MATKDTGGGQ) shows a compositional bias: gly residues. The disordered stretch occupies residues 1 to 45 (MATKDTGGGQQKATRNTEEVEEQAQDAQASEDLKERQEKLSDDVD). The stretch at 9-60 (GQQKATRNTEEVEEQAQDAQASEDLKERQEKLSDDVDSVLDEIDDVLEENAE) forms a coiled coil. Residues 28 to 66 (QASEDLKERQEKLSDDVDSVLDEIDDVLEENAEDFVRSF) form an ARC ATPase binding region. A compositionally biased stretch (basic and acidic residues) spans 31–42 (EDLKERQEKLSD). Glu-72 participates in a covalent cross-link: Isoglutamyl lysine isopeptide (Glu-Lys) (interchain with K-? in acceptor proteins).

The protein belongs to the prokaryotic ubiquitin-like protein family. Strongly interacts with the proteasome-associated ATPase ARC through a hydrophobic interface; the interacting region of Pup lies in its C-terminal half. There is one Pup binding site per ARC hexamer ring.

It functions in the pathway protein degradation; proteasomal Pup-dependent pathway. Its function is as follows. Protein modifier that is covalently attached to lysine residues of substrate proteins, thereby targeting them for proteasomal degradation. The tagging system is termed pupylation. This Streptomyces avermitilis (strain ATCC 31267 / DSM 46492 / JCM 5070 / NBRC 14893 / NCIMB 12804 / NRRL 8165 / MA-4680) protein is Prokaryotic ubiquitin-like protein Pup.